Here is a 509-residue protein sequence, read N- to C-terminus: ATP synthase subunit alpha (509 aa).

169–176 (GDRKTGKT) provides a ligand contact to ATP.

It belongs to the ATPase alpha/beta chains family. As to quaternary structure, F-type ATPases have 2 components, CF(1) - the catalytic core - and CF(0) - the membrane proton channel. CF(1) has five subunits: alpha(3), beta(3), gamma(1), delta(1), epsilon(1). CF(0) has three main subunits: a(1), b(2) and c(9-12). The alpha and beta chains form an alternating ring which encloses part of the gamma chain. CF(1) is attached to CF(0) by a central stalk formed by the gamma and epsilon chains, while a peripheral stalk is formed by the delta and b chains.

It localises to the cell membrane. The catalysed reaction is ATP + H2O + 4 H(+)(in) = ADP + phosphate + 5 H(+)(out). In terms of biological role, produces ATP from ADP in the presence of a proton gradient across the membrane. The alpha chain is a regulatory subunit. This is ATP synthase subunit alpha from Limosilactobacillus reuteri (strain DSM 20016) (Lactobacillus reuteri).